The following is a 434-amino-acid chain: Magnesium transporter MRS2 homolog, mitochondrial (434 aa).

The N-terminal 53 residues, 1–53 (MECLRCLPGLLPRAAQPRRALWTAVARLSLAACGGRATPLRSRSPKASSTARA), are a transit peptide targeting the mitochondrion. Topologically, residues 54–330 (AGDVLRFRTS…SHRNVMMRLN (277 aa)) are mitochondrial matrix. Positions 234, 237, 238, 303, and 320 each coordinate Mg(2+). Residues 331-350 (LQLTMGTFSLSLFGLMGVAF) traverse the membrane as a helical segment. Positions 351 and 353 each coordinate Mg(2+). The GMN motif motif lies at 351 to 353 (GMN). Over 351–361 (GMNLESSLEED) the chain is Mitochondrial intermembrane. The chain crosses the membrane as a helical span at residues 362–392 (HRVFWLVTGIMFMGSGLIWRRLLSFLGRQLE). The Mitochondrial matrix portion of the chain corresponds to 393–434 (APVPPVMTSLPKKTLLANRRMDVKNSLRPEGLGASRTILASR).

It belongs to the CorA metal ion transporter (MIT) (TC 1.A.35) family. Homopentamer. Ubiquitously expressed.

The protein localises to the mitochondrion inner membrane. With respect to regulation, may be regulated by calcium ions. Its function is as follows. Magnesium transporter that mediates the influx of magnesium into the mitochondrial matrix and regulates magnesium metabolism. Also permeable to calcium, sodium and potassium ions. Required for normal expression of the mitochondrial respiratory complex I subunits. May play a role in maintaining the inner mitochondrial membrane potential. The sequence is that of Magnesium transporter MRS2 homolog, mitochondrial (Mrs2) from Mus musculus (Mouse).